A 339-amino-acid chain; its full sequence is Putative clathrin assembly protein At1g14686 (339 aa).

The region spanning 16–148 (SLIAADDILT…ILFHDGNRHR (133 aa)) is the ENTH domain. The tract at residues 283-307 (ESSEESAERTEIAEEEEEEEEEIET) is disordered. Residues 295–305 (AEEEEEEEEEI) show a composition bias toward acidic residues.

The protein localises to the membrane. Its subcellular location is the clathrin-coated pit. It localises to the golgi apparatus. The protein resides in the cytoplasmic vesicle. It is found in the clathrin-coated vesicle. This chain is Putative clathrin assembly protein At1g14686, found in Arabidopsis thaliana (Mouse-ear cress).